A 481-amino-acid chain; its full sequence is Halobacterial transducer protein 9 (481 aa).

The PAS domain occupies 10 to 81; it reads SPFTVPLLLN…NKVADTPIDA (72 aa). Residues 208-444 form the Methyl-accepting transducer domain; that stretch reads DVERLEAASQ…EIAAMVDETA (237 aa).

This sequence belongs to the methyl-accepting chemotaxis (MCP) protein family.

The protein localises to the cytoplasm. Its function is as follows. Potentially involved in chemo- or phototactic signal transduction. This chain is Halobacterial transducer protein 9 (htr9), found in Halobacterium salinarum (strain ATCC 700922 / JCM 11081 / NRC-1) (Halobacterium halobium).